Consider the following 400-residue polypeptide: Acetate kinase (400 aa).

Position 10 (Asn10) interacts with Mg(2+). Lys17 lines the ATP pocket. Substrate is bound at residue Arg91. Asp150 acts as the Proton donor/acceptor in catalysis. ATP contacts are provided by residues 210 to 214 (HLGNG), 285 to 287 (DCR), and 333 to 337 (GIGEN). A Mg(2+)-binding site is contributed by Glu387.

This sequence belongs to the acetokinase family. Homodimer. Requires Mg(2+) as cofactor. Mn(2+) is required as a cofactor.

The protein resides in the cytoplasm. It catalyses the reaction acetate + ATP = acetyl phosphate + ADP. The protein operates within metabolic intermediate biosynthesis; acetyl-CoA biosynthesis; acetyl-CoA from acetate: step 1/2. Its function is as follows. Catalyzes the formation of acetyl phosphate from acetate and ATP. Can also catalyze the reverse reaction. This chain is Acetate kinase, found in Pectobacterium atrosepticum (strain SCRI 1043 / ATCC BAA-672) (Erwinia carotovora subsp. atroseptica).